We begin with the raw amino-acid sequence, 250 residues long: Eukaryotic translation initiation factor 3 subunit K (250 aa).

The 182-residue stretch at 54-235 folds into the PCI domain; it reads YDLFGNLAIL…DVKAGVVKEN (182 aa).

It belongs to the eIF-3 subunit K family. As to quaternary structure, component of the eukaryotic translation initiation factor 3 (eIF-3) complex.

The protein resides in the cytoplasm. Its function is as follows. Component of the eukaryotic translation initiation factor 3 (eIF-3) complex, which is involved in protein synthesis of a specialized repertoire of mRNAs and, together with other initiation factors, stimulates binding of mRNA and methionyl-tRNAi to the 40S ribosome. The eIF-3 complex specifically targets and initiates translation of a subset of mRNAs involved in cell proliferation. This chain is Eukaryotic translation initiation factor 3 subunit K, found in Cryptococcus neoformans var. neoformans serotype D (strain B-3501A) (Filobasidiella neoformans).